Consider the following 416-residue polypeptide: MKITVLGAGVVGTAAAYYLAADGHEVTVIERHAAPARGTSQSNAGLVSPGDATAWASPAALKTFLRGLYNHDLGIKVRLRFDPYFLAWSLRFLRQCTVARLRANSQVKLRLALYSRDCINAISADTGIHYDERKKGILYFFRSQHSLNTGTDNYRYLAEHGLPIEIVGRDRLVELEPGLAGVKEKIAGGVYSPIDQTGDSRLFVDNLAAYASEKLGVKFLFGTTVEGLDIQGDRVRAVMTSAGPVTGDAVVISMGPESGLLGRRYGIDLPVYPVKGYTATIPLEDESKGPTIGGADEDQLMAYSRLGNRLRLASTAEFTGFDRTHKPSDFTTMFRTARDLFPGAFDEKKAELWAGLRPMMPGSVPVIGQARYKNLYLDTGHGHVGWTMACGSGKFLADLVAGRKPEIDPQGLVYGG.

3-17 (ITVLGAGVVGTAAAY) contacts FAD.

The protein belongs to the DadA oxidoreductase family. The cofactor is FAD.

It catalyses the reaction a D-alpha-amino acid + A + H2O = a 2-oxocarboxylate + AH2 + NH4(+). Its function is as follows. Oxidative deamination of D-amino acids. The protein is D-amino acid dehydrogenase 2 (dadA2) of Mesorhizobium japonicum (strain LMG 29417 / CECT 9101 / MAFF 303099) (Mesorhizobium loti (strain MAFF 303099)).